The following is a 140-amino-acid chain: UPF0179 protein Msp_0996 (140 aa).

Belongs to the UPF0179 family.

This Methanosphaera stadtmanae (strain ATCC 43021 / DSM 3091 / JCM 11832 / MCB-3) protein is UPF0179 protein Msp_0996.